The chain runs to 780 residues: MENRFQNDTLFSEWFGQSLSDVRFPDNVTVYSQADSAVSFENVRQPIKLVRAAMGSGKTTALIHFLKQVPRELSVLLISCRKTFAAEILHRFTLNGLKDFELYCDITERQINNRKVIVQIESLHRLTENYDVLILDEIMSIIKQFYSKTMTKTKEVDCKFLSLIKNSSHVIAMDATLTRHVVEFFAAFKPDTQIALIRNTFVSAMFSNRIAYFCDTFFGKEFSFFARLEDKLRWDKKLCLFCSTVLAAEYMYDLIRSRFPLKKVLLLTSKQGKCSSIESWIRYDVVIYTSVVTVGLSFEPVYFSSLFVYIQLAKGGPDMVSVFQSIGRVRRVIDEDIYIYMNPVLIRSYDPLAPIAIPPCSDWSVAEQSIISESCIDFRGKCSGAHKYNFCSVLKSLFRYRHYIEKTTITSLSDSLFLLCSLLCENSIKVDIVGNGFPMRKEVFLSFLQILVEECHFIEKKITLPGDDMTFQEIISSRETIMNGDFYENGDQLLHKDYITDMGKFRATFLSPGVDIFIASDIVYDLKNESKRYVFVNVWLQKCVSAGVESTEIERVFCERIKCYMLPKSFLCDEYFVLGDISGVYEWGMLIDLAFLAEMIRKDLKLKSCTDTTTDISEDDLLLCAARRSSDILQIMQLVFTVHVQFFQKYSLQTLQLFNKLRGMRIVTGVFSIEKFSISILRLFFKCAFNMTLSASRPRYIPGKAYRNLTKNDMENMLDNWEISRTNLKTCKELRKALTEASRARRKQTIYKLQGSDISLSVSEVGVFGQHASPGVCVSS.

The 157-residue stretch at 39–195 (SFENVRQPIK…AAFKPDTQIA (157 aa)) folds into the Helicase ATP-binding domain. 52–59 (AAMGSGKT) serves as a coordination point for ATP.

This sequence belongs to the herpesviridae OriBP family.

Probably involved in DNA replication. Binds the origin of replication (ori). The chain is Replication origin-binding protein (U73) from Human herpesvirus 6A (strain Uganda-1102) (HHV-6 variant A).